We begin with the raw amino-acid sequence, 254 residues long: C-X-C motif chemokine 16 (254 aa).

The first 29 residues, 1 to 29, serve as a signal peptide directing secretion; sequence MGRDLRPGSRVLLLLLLLLLVYLTQPGNG. Topologically, residues 30–205 are extracellular; sequence NEGSVTGSCY…AGPTARTSAT (176 aa). The interval 32–107 is chemokine; that stretch reads GSVTGSCYCG…DLKECGHAYS (76 aa). Cystine bridges form between C38–C68 and C40–C82. Residues 146–165 are disordered; the sequence is QSTQRPTLPVGSLSSDKELT. N-linked (GlcNAc...) asparagine glycosylation occurs at N168. The disordered stretch occupies residues 178-200; it reads SLAAGPEAGENQKQPEKNAGPTA. Residues 206 to 226 form a helical membrane-spanning segment; the sequence is VPVLCLLAIIFILTAALSYVL. Over 227–254 the chain is Cytoplasmic; that stretch reads CKRRRGQSPQSSPDLPVHYIPVAPDSNT. The tract at residues 231–254 is disordered; that stretch reads RGQSPQSSPDLPVHYIPVAPDSNT.

Belongs to the intercrine alpha (chemokine CxC) family. Post-translationally, glycosylated. In terms of tissue distribution, expressed in T-cell areas. Expressed in spleen, lymph nodes, lung, kidney, small intestine and thymus. Weak expression in heart and liver and no expression in brain and bone marrow.

Its subcellular location is the cell membrane. The protein localises to the secreted. Its function is as follows. Acts as a scavenger receptor on macrophages, which specifically binds to OxLDL (oxidized low density lipoprotein), suggesting that it may be involved in pathophysiology such as atherogenesis. Induces a strong chemotactic response. Induces calcium mobilization. Binds to CXCR6/Bonzo. In Homo sapiens (Human), this protein is C-X-C motif chemokine 16 (CXCL16).